We begin with the raw amino-acid sequence, 452 residues long: Probable glycine dehydrogenase (decarboxylating) subunit 1 (452 aa).

Belongs to the GcvP family. N-terminal subunit subfamily. As to quaternary structure, the glycine cleavage system is composed of four proteins: P, T, L and H. In this organism, the P 'protein' is a heterodimer of two subunits.

It carries out the reaction N(6)-[(R)-lipoyl]-L-lysyl-[glycine-cleavage complex H protein] + glycine + H(+) = N(6)-[(R)-S(8)-aminomethyldihydrolipoyl]-L-lysyl-[glycine-cleavage complex H protein] + CO2. Functionally, the glycine cleavage system catalyzes the degradation of glycine. The P protein binds the alpha-amino group of glycine through its pyridoxal phosphate cofactor; CO(2) is released and the remaining methylamine moiety is then transferred to the lipoamide cofactor of the H protein. In Sphingopyxis alaskensis (strain DSM 13593 / LMG 18877 / RB2256) (Sphingomonas alaskensis), this protein is Probable glycine dehydrogenase (decarboxylating) subunit 1.